The following is a 411-amino-acid chain: Serpin A3-3 (411 aa).

Residues 1 to 24 (MRAERLSPLLALGLLVAGIRSVHC) form the signal peptide. Asparagine 100, asparagine 180, asparagine 230, asparagine 264, and asparagine 318 each carry an N-linked (GlcNAc...) asparagine glycan.

This sequence belongs to the serpin family. As to quaternary structure, homodimer.

It is found in the cytoplasmic vesicle. The protein resides in the secretory vesicle. The protein localises to the chromaffin granule. It localises to the secreted. In terms of biological role, serine protease inhibitor. Strongly inhibits elastase and trypsin stoichiometrically at the molar ratio of 1:1. Acts as a moderate inhibitor of plasmin and chymotrypsin. Does not inhibit thrombin, urokinase, kallikrein, tissue plasminogen activator, cathepsin G or the cysteine proteases papain, cathepsin B or cathepsin L. This is Serpin A3-3 (SERPINA3-3) from Bos taurus (Bovine).